Here is a 173-residue protein sequence, read N- to C-terminus: NADH-ubiquinone oxidoreductase chain 6 (173 aa).

5 helical membrane-spanning segments follow: residues 1–21 (MVYFVSMMMIGLILGLMGVAS), 28–48 (AALGLVTAAGVGCGLLVSYGG), 53–73 (LILFLIYLGGMLVVFAYTAAL), 87–107 (VLMYVGIYLTGLVIAGKYFLV), and 139–159 (LGGWMLVLSGWVLLVTLFVVL).

Belongs to the complex I subunit 6 family.

Its subcellular location is the mitochondrion membrane. It catalyses the reaction a ubiquinone + NADH + 5 H(+)(in) = a ubiquinol + NAD(+) + 4 H(+)(out). In terms of biological role, core subunit of the mitochondrial membrane respiratory chain NADH dehydrogenase (Complex I) that is believed to belong to the minimal assembly required for catalysis. Complex I functions in the transfer of electrons from NADH to the respiratory chain. The immediate electron acceptor for the enzyme is believed to be ubiquinone. This chain is NADH-ubiquinone oxidoreductase chain 6 (MT-ND6), found in Scyliorhinus canicula (Small-spotted catshark).